A 516-amino-acid polypeptide reads, in one-letter code: Gastrula zinc finger protein XlCGF53.1 (516 aa).

Disordered stretches follow at residues 1–33 (MGMWEEASDTGMKGKKKKKDKNEEEEEERGKKE) and 200–220 (GNQSDCSINPLTEQIQGTDKP). Residues 200–218 (GNQSDCSINPLTEQIQGTD) show a composition bias toward polar residues. C2H2-type zinc fingers lie at residues 312-334 (YICSECQKHFSTKAGLARHQKTH), 354-376 (FPCSECGKRFARRQHLTDHQSSH), 382-404 (YACSQCEKYFPHRSNLNRHLKLH), 410-432 (FPCSQCGKRFPCVSDLNIHRRVH), 438-460 (YSCSECGKCFKHHSNLTNHQRTH), 466-488 (FSCTECGKGFKDRSSLTVHHRTH), and 494-516 (FSCTECGKGFKDRSSLTVHHRTH).

It belongs to the krueppel C2H2-type zinc-finger protein family.

The protein localises to the nucleus. Its function is as follows. May be involved in transcriptional regulation. This is Gastrula zinc finger protein XlCGF53.1 from Xenopus laevis (African clawed frog).